The following is a 577-amino-acid chain: Proton channel OTOP3 (577 aa).

The segment at 1–46 (MASQTSAPAEPAPMPSPEAKTTEGASSYDQADMETKHAGSPCPPKQ) is disordered. At 1 to 69 (MASQTSAPAE…RDRQAQKAGQ (69 aa)) the chain is on the cytoplasmic side. The helical transmembrane segment at 70 to 90 (LFSGLLALNVVFLGGAFICSM) threads the bilayer. Topologically, residues 91 to 100 (IFNKVSVTLG) are extracellular. A helical membrane pass occupies residues 101–124 (DVWILLAALKVLSLLWLLYYTVGT). The Cytoplasmic segment spans residues 125 to 140 (TRKPHAVLYRDPHAGP). Residues 141–162 (IWVRGSLVLFGSCTVCLNIFRM) form a helical membrane-spanning segment. Topologically, residues 163-174 (GYDVSHIHCKSE) are extracellular. The chain crosses the membrane as a helical span at residues 175–198 (VELIFPAIEIVFMIIQTWVLWRHC). Residues 199-206 (KDCVQVQT) lie on the Cytoplasmic side of the membrane. A helical membrane pass occupies residues 207–229 (NFTRCGLMLTLATNLLMWVLAVT). Residues 230–276 (NDSMHREIEAELDALMEKFSGNGTNTCMCLNTTVCEVFRKGYLMLYP) lie on the Extracellular side of the membrane. The helical transmembrane segment at 277-293 (FSTEYCLICCAVLFVMW) threads the bilayer. At 294–319 (KNVSRSLAAHTGAHPNRSPFRLHGTI) the chain is on the cytoplasmic side. A helical membrane pass occupies residues 320 to 339 (FGPLLGLLALVAGVCVFVLF). The Extracellular portion of the chain corresponds to 340–353 (QIEASGPDIARQYF). A helical membrane pass occupies residues 354-376 (TLYYAFYVAVLPTMSLACLAGTA). Topologically, residues 377–394 (IHGLEERELDTLKNPTRS) are cytoplasmic. A helical transmembrane segment spans residues 395 to 416 (LDVVLLMGAALGQMGIAYFSIV). Residues 417-427 (AIVATQPHELL) lie on the Extracellular side of the membrane. A helical transmembrane segment spans residues 428 to 450 (NQLILAYSLLLILQHITQNLFII). Residues 451–510 (EGLHRRPLWEPAVSGVMEKQDVELPRRGSLRELGQDLRRASRAYIHSFSHLNWKRRMLKE) are Cytoplasmic-facing. Residues 511 to 528 (ISLFLILCNITLWMMPAF) form a helical membrane-spanning segment. Topologically, residues 529-547 (GIHPEFENGLEKDFYGYRT) are extracellular. A helical membrane pass occupies residues 548-570 (WFTIVNFGLPLGVFYRMHSVGGL). The Cytoplasmic portion of the chain corresponds to 571–577 (VEVYLGA).

The protein belongs to the otopetrin family. In terms of assembly, homodimer. In terms of tissue distribution, expressed in epidermis, small intestine, stomach and retina.

It is found in the cell membrane. It catalyses the reaction H(+)(in) = H(+)(out). Its activity is regulated as follows. Activated by extracellular acidification. Activated by Zn(2+) under non-acidic conditions. In terms of biological role, proton-selective channel gated by extracellular protons. The chain is Proton channel OTOP3 from Mus musculus (Mouse).